A 64-amino-acid polypeptide reads, in one-letter code: Long neurotoxin MS4 (64 aa).

5 cysteine pairs are disulfide-bonded: Cys-3–Cys-24, Cys-6–Cys-11, Cys-17–Cys-41, Cys-45–Cys-57, and Cys-58–Cys-63.

It belongs to the three-finger toxin family. Ancestral subfamily. In terms of tissue distribution, expressed by the venom gland.

Its subcellular location is the secreted. Produces peripheral paralysis by blocking neuromuscular transmission at the postsynaptic site. Weak inhibitor of the endogenous nicotinic acetylcholine receptors (nAChR) in the human rhabdomyosarcoma TE 671 cell line with an IC(50) of 690 mM. This neurotoxin is lethal to zebrafish by injection at the back of the dorsolateral region, but is not toxic to mice by intraperitoneal injection. The polypeptide is Long neurotoxin MS4 (Micrurus surinamensis (Surinam coral snake)).